A 175-amino-acid polypeptide reads, in one-letter code: MSQALTLARPYARAAFATARDEGAFAPWSDALAFSAHVAADPRVAALLANPELGRDDAVALLAPVTHGETYSRFLAILAESHRLPLLPEISGMFDALRADAEHVVKANVTSAAELSAGELDAIKTALRKRFNREVEVTTAVDASLIGGAVIDAGDVVIDGSLKGKLARLQTALAN.

Belongs to the ATPase delta chain family. In terms of assembly, F-type ATPases have 2 components, F(1) - the catalytic core - and F(0) - the membrane proton channel. F(1) has five subunits: alpha(3), beta(3), gamma(1), delta(1), epsilon(1). F(0) has three main subunits: a(1), b(2) and c(10-14). The alpha and beta chains form an alternating ring which encloses part of the gamma chain. F(1) is attached to F(0) by a central stalk formed by the gamma and epsilon chains, while a peripheral stalk is formed by the delta and b chains.

The protein localises to the cell inner membrane. F(1)F(0) ATP synthase produces ATP from ADP in the presence of a proton or sodium gradient. F-type ATPases consist of two structural domains, F(1) containing the extramembraneous catalytic core and F(0) containing the membrane proton channel, linked together by a central stalk and a peripheral stalk. During catalysis, ATP synthesis in the catalytic domain of F(1) is coupled via a rotary mechanism of the central stalk subunits to proton translocation. In terms of biological role, this protein is part of the stalk that links CF(0) to CF(1). It either transmits conformational changes from CF(0) to CF(1) or is implicated in proton conduction. The protein is ATP synthase subunit delta of Stenotrophomonas maltophilia (strain R551-3).